The sequence spans 259 residues: Hydroxyethylthiazole kinase (259 aa).

M50 serves as a coordination point for substrate. 2 residues coordinate ATP: R122 and T168. G195 is a substrate binding site.

This sequence belongs to the Thz kinase family. Requires Mg(2+) as cofactor.

It carries out the reaction 5-(2-hydroxyethyl)-4-methylthiazole + ATP = 4-methyl-5-(2-phosphooxyethyl)-thiazole + ADP + H(+). Its pathway is cofactor biosynthesis; thiamine diphosphate biosynthesis; 4-methyl-5-(2-phosphoethyl)-thiazole from 5-(2-hydroxyethyl)-4-methylthiazole: step 1/1. Functionally, catalyzes the phosphorylation of the hydroxyl group of 4-methyl-5-beta-hydroxyethylthiazole (THZ). In Escherichia coli O127:H6 (strain E2348/69 / EPEC), this protein is Hydroxyethylthiazole kinase.